The sequence spans 814 residues: Phenylalanine--tRNA ligase beta subunit (814 aa).

In terms of domain architecture, tRNA-binding spans 39–153 (SKNVNGVVLG…LKHELGTPVS (115 aa)). Residues 414 to 500 (NEDIFIKLRR…RLIGYDRFDL (87 aa)) form the B5 domain. Mg(2+) contacts are provided by Asp478, Asp484, Glu487, and Glu488. Residues 720–813 (PIVPKIERDI…IEKSFQTKLR (94 aa)) enclose the FDX-ACB domain.

It belongs to the phenylalanyl-tRNA synthetase beta subunit family. Type 1 subfamily. In terms of assembly, tetramer of two alpha and two beta subunits. The cofactor is Mg(2+).

The protein resides in the cytoplasm. It carries out the reaction tRNA(Phe) + L-phenylalanine + ATP = L-phenylalanyl-tRNA(Phe) + AMP + diphosphate + H(+). The chain is Phenylalanine--tRNA ligase beta subunit from Prochlorococcus marinus (strain MIT 9312).